A 651-amino-acid polypeptide reads, in one-letter code: MPTIQLPDGSVKQFSKPVSVQAVAESIGTSLAKPALAGKIDDHLVDVSFIIDKDVSLRIITEKDPEGLEVIRHSAAHLLAHAVKELFPKAEVTIGPVVEDGFYYDFAFERSFTPEDLEKIEEKMRSLAKADLAVERRVLSRDEALTLFKKMGERYKVEIIRDIPKEEILTAYQQGDFIDLCRGPHVPRTGMLKAFKLTKLAGAYWRGDSNNEMLQRIYGTAWADTKALKAYLYRLEEAEKRDHRLLAKKMDLFHFQPESPGNVFWHPNGWSIILQMREYIRHITHKYGYQEVHTPQLIDASLWDKSGHLEKFGDDIFSLPLEPQQYVIKPMSCPAHVQIFNQGVKSYRDLPLRYAEFGACHRNEPSGTLHGLMRLRGFVQDDAHIFCTEDQIQSEVSAFIDQLHEVYADFGFTEVIHKLSTRPEKRVGSDEVWTKAEQALAEALNRKGVEWDILPGEGAFYGPKIEFSLRDCLGRIWQCGTVQVDFSVPERLGAHYIAEDGSKKPPVMIHRAILGSFERFLGILLEESAGKLPLWLAPVQVVVMNITDRQADYVGQTVENLQNLGIRAHSDLRNEKIGFKIREHTIARVPYLVVIGDREVADKTLSVRALEDEASTTITLEEFARQLKAEISQRSRKSPAPSPLFPVGGES.

A TGS domain is found at 1–61 (MPTIQLPDGS…DKDVSLRIIT (61 aa)). The catalytic stretch occupies residues 242–533 (DHRLLAKKMD…LLEESAGKLP (292 aa)). Residues Cys-333, His-384, and His-510 each coordinate Zn(2+). The tract at residues 631–651 (ISQRSRKSPAPSPLFPVGGES) is disordered.

The protein belongs to the class-II aminoacyl-tRNA synthetase family. Homodimer. Zn(2+) is required as a cofactor.

It localises to the cytoplasm. It carries out the reaction tRNA(Thr) + L-threonine + ATP = L-threonyl-tRNA(Thr) + AMP + diphosphate + H(+). Functionally, catalyzes the attachment of threonine to tRNA(Thr) in a two-step reaction: L-threonine is first activated by ATP to form Thr-AMP and then transferred to the acceptor end of tRNA(Thr). Also edits incorrectly charged L-seryl-tRNA(Thr). This chain is Threonine--tRNA ligase, found in Coxiella burnetii (strain RSA 493 / Nine Mile phase I).